Reading from the N-terminus, the 300-residue chain is tRNA dimethylallyltransferase (300 aa).

ATP is bound at residue 9-16 (GPTASGKS). Substrate is bound at residue 11–16 (TASGKS). The interaction with substrate tRNA stretch occupies residues 34-37 (DSKQ).

The protein belongs to the IPP transferase family. As to quaternary structure, monomer. It depends on Mg(2+) as a cofactor.

It carries out the reaction adenosine(37) in tRNA + dimethylallyl diphosphate = N(6)-dimethylallyladenosine(37) in tRNA + diphosphate. Its function is as follows. Catalyzes the transfer of a dimethylallyl group onto the adenine at position 37 in tRNAs that read codons beginning with uridine, leading to the formation of N6-(dimethylallyl)adenosine (i(6)A). This chain is tRNA dimethylallyltransferase, found in Ehrlichia canis (strain Jake).